A 192-amino-acid chain; its full sequence is Large ribosomal subunit protein bL9 (192 aa).

The disordered stretch occupies residues 173–192 (ALRPEDFFDPEADGLDENEA). Acidic residues predominate over residues 179–192 (FFDPEADGLDENEA).

Belongs to the bacterial ribosomal protein bL9 family.

Binds to the 23S rRNA. This chain is Large ribosomal subunit protein bL9, found in Rhizobium etli (strain ATCC 51251 / DSM 11541 / JCM 21823 / NBRC 15573 / CFN 42).